The chain runs to 277 residues: Uridine-cytidine kinase 1 (277 aa).

Residues 1–30 (MASAGGEDCESPAPEADRPHQRPFLIGVSG) are disordered. Residue 30-38 (GGTASGKST) participates in ATP binding. D65 is a catalytic residue. 6 residues coordinate substrate: D87, Y115, H120, R169, R178, and Q186. D215 is a binding site for ATP. The tract at residues 247 to 277 (SYKRTFSEPGDHPGMLTSGKRSHLESSSRPH) is disordered. Position 251 is a phosphothreonine (T251). S253 bears the Phosphoserine mark. Over residues 268-277 (SHLESSSRPH) the composition is skewed to basic and acidic residues.

Belongs to the uridine kinase family. Ubiquitous.

It carries out the reaction uridine + ATP = UMP + ADP + H(+). It catalyses the reaction cytidine + ATP = CMP + ADP + H(+). It functions in the pathway pyrimidine metabolism; CTP biosynthesis via salvage pathway; CTP from cytidine: step 1/3. The protein operates within pyrimidine metabolism; UMP biosynthesis via salvage pathway; UMP from uridine: step 1/1. Its function is as follows. Phosphorylates uridine and cytidine to uridine monophosphate and cytidine monophosphate. Does not phosphorylate deoxyribonucleosides or purine ribonucleosides. Can use ATP or GTP as a phosphate donor. Can also phosphorylate cytidine and uridine nucleoside analogs such as 6-azauridine, 5-fluorouridine, 4-thiouridine, 5-bromouridine, N(4)-acetylcytidine, N(4)-benzoylcytidine, 5-fluorocytidine, 2-thiocytidine, 5-methylcytidine, and N(4)-anisoylcytidine. This Homo sapiens (Human) protein is Uridine-cytidine kinase 1 (UCK1).